Here is a 189-residue protein sequence, read N- to C-terminus: Photosystem I assembly protein Ycf4 (189 aa).

2 helical membrane-spanning segments follow: residues 31–51 and 70–90; these read TVIL…YFGF and VMSF…LTII.

The protein belongs to the Ycf4 family.

The protein resides in the plastid. The protein localises to the chloroplast thylakoid membrane. In terms of biological role, seems to be required for the assembly of the photosystem I complex. The protein is Photosystem I assembly protein Ycf4 of Chlorokybus atmophyticus (Soil alga).